Here is a 290-residue protein sequence, read N- to C-terminus: Ribosomal RNA small subunit methyltransferase A (290 aa).

Residues Asn-27, Leu-29, Gly-54, Glu-75, Asp-100, and Asn-125 each coordinate S-adenosyl-L-methionine.

The protein belongs to the class I-like SAM-binding methyltransferase superfamily. rRNA adenine N(6)-methyltransferase family. RsmA subfamily.

It localises to the cytoplasm. The enzyme catalyses adenosine(1518)/adenosine(1519) in 16S rRNA + 4 S-adenosyl-L-methionine = N(6)-dimethyladenosine(1518)/N(6)-dimethyladenosine(1519) in 16S rRNA + 4 S-adenosyl-L-homocysteine + 4 H(+). Its function is as follows. Specifically dimethylates two adjacent adenosines (A1518 and A1519) in the loop of a conserved hairpin near the 3'-end of 16S rRNA in the 30S particle. May play a critical role in biogenesis of 30S subunits. This chain is Ribosomal RNA small subunit methyltransferase A, found in Streptococcus sanguinis (strain SK36).